We begin with the raw amino-acid sequence, 379 residues long: F-box protein At1g30200 (379 aa).

The 49-residue stretch at 24 to 72 (DHFDLLPDSLLLLIFDKVADVKDLGRCCIVSRRFHSLVPFVENVLVRVD) folds into the F-box domain.

The protein is F-box protein At1g30200 of Arabidopsis thaliana (Mouse-ear cress).